Here is a 105-residue protein sequence, read N- to C-terminus: Putative pterin-4-alpha-carbinolamine dehydratase (105 aa).

This sequence belongs to the pterin-4-alpha-carbinolamine dehydratase family.

The catalysed reaction is (4aS,6R)-4a-hydroxy-L-erythro-5,6,7,8-tetrahydrobiopterin = (6R)-L-erythro-6,7-dihydrobiopterin + H2O. The chain is Putative pterin-4-alpha-carbinolamine dehydratase from Sinorhizobium medicae (strain WSM419) (Ensifer medicae).